The chain runs to 178 residues: GPI mannosyltransferase 2 subunit C167.09 (178 aa).

An N-terminal signal peptide occupies residues Met1–Ala20. Residues Asn21–Pro152 lie on the Lumenal side of the membrane. Residues Asn48, Asn49, Asn106, Asn115, and Asn122 are each glycosylated (N-linked (GlcNAc...) asparagine). The chain crosses the membrane as a helical span at residues Ile153–Ile173. Residues Lys174–Asp178 are Cytoplasmic-facing.

As to quaternary structure, part of the GPI mannosyltransferase 2 complex composed of gpi18 and C167.09.

It is found in the endoplasmic reticulum membrane. It functions in the pathway glycolipid biosynthesis; glycosylphosphatidylinositol-anchor biosynthesis. Essential component of the GPI mannosyltransferase 2 complex. Responsible for the transfer of the second mannose to the glycosylphosphatidylinositol during GPI precursor assembly. The polypeptide is GPI mannosyltransferase 2 subunit C167.09 (Schizosaccharomyces pombe (strain 972 / ATCC 24843) (Fission yeast)).